The chain runs to 453 residues: Secreted aspartic protease 10 (453 aa).

An N-terminal signal peptide occupies residues 1 to 20; sequence MDLVIMNFVFLLYLTSVVKC. One can recognise a Peptidase A1 domain in the interval 52 to 372; it reads YTTELEIGSN…DLQDMTISVA (321 aa). The active site involves Asp70. Residue 70 to 72 coordinates pepstatin A; sequence DTG. An intrachain disulfide couples Cys85 to Cys112. N-linked (GlcNAc...) asparagine glycosylation is found at Asn115 and Asn128. Pepstatin A is bound at residue 138–139; the sequence is VD. Asn168, Asn208, Asn211, and Asn245 each carry an N-linked (GlcNAc...) asparagine glycan. Asp266 is an active-site residue. Pepstatin A is bound at residue 266 to 270; that stretch reads DTGST. Residue Asn287 is glycosylated (N-linked (GlcNAc...) asparagine). An intrachain disulfide couples Cys301 to Cys333. The interval 387–432 is disordered; the sequence is NPNEDQNEVPTSTSFTQSASSSGSQPSSTISGENMDKNTTSSSSGN. The span at 397–417 shows a compositional bias: low complexity; that stretch reads TSTSFTQSASSSGSQPSSTIS. The span at 423–432 shows a compositional bias: polar residues; the sequence is KNTTSSSSGN. Asn424 is a glycosylation site (N-linked (GlcNAc...) asparagine). Ser429 is lipidated: GPI-anchor amidated serine. A propeptide spans 430–453 (removed in mature form); it reads SGNCQTRSWIAILSALFLVYIHII.

This sequence belongs to the peptidase A1 family. Post-translationally, the GPI-anchor is attached to the protein in the endoplasmic reticulum and serves to target the protein to the cell surface. There, the glucosamine-inositol phospholipid moiety is cleaved off and the GPI-modified mannoprotein is covalently attached via its lipidless GPI glycan remnant to the 1,6-beta-glucan of the outer cell wall layer.

The protein localises to the secreted. It localises to the cell membrane. The enzyme catalyses Preferential cleavage at the carboxyl of hydrophobic amino acids, but fails to cleave 15-Leu-|-Tyr-16, 16-Tyr-|-Leu-17 and 24-Phe-|-Phe-25 of insulin B chain. Activates trypsinogen, and degrades keratin.. Its function is as follows. Secreted aspartic peptidases (SAPs) are a group of ten acidic hydrolases considered as key virulence factors. These enzymes supply the fungus with nutrient amino acids as well as are able to degrade the selected host's proteins involved in the immune defense. Required for cell surface integrity and cell separation during budding. In Candida albicans (strain SC5314 / ATCC MYA-2876) (Yeast), this protein is Secreted aspartic protease 10.